The primary structure comprises 324 residues: Cyclin-dependent kinase 1 (324 aa).

Residues 4-307 form the Protein kinase domain; sequence YQKIEKIGEG…AKQACMHPYF (304 aa). ATP-binding positions include 10–18 and K34; that span reads IGEGTYGVV. The residue at position 14 (T14) is a Phosphothreonine. Residue Y15 is modified to Phosphotyrosine. D148 functions as the Proton acceptor in the catalytic mechanism. At T181 the chain carries Phosphothreonine; by CAK.

It belongs to the protein kinase superfamily. CMGC Ser/Thr protein kinase family. CDC2/CDKX subfamily. As to quaternary structure, forms a stable but non-covalent complex with a regulatory subunit (SUC1) and with a cyclin.

It carries out the reaction L-seryl-[protein] + ATP = O-phospho-L-seryl-[protein] + ADP + H(+). It catalyses the reaction L-threonyl-[protein] + ATP = O-phospho-L-threonyl-[protein] + ADP + H(+). Its activity is regulated as follows. Phosphorylation at Thr-14 or Tyr-15 inactivates the enzyme, while phosphorylation at Thr-181 activates it. Functionally, cyclin-dependent kinase that acts as a master regulator of the mitotic and meiotic cell cycles. In Ajellomyces capsulatus (Darling's disease fungus), this protein is Cyclin-dependent kinase 1.